A 261-amino-acid chain; its full sequence is 14-3-3-like protein B (261 aa).

Residues 237 to 261 form a disordered region; sequence DIPEDGEDSQKANGTAKFGGGDDAE.

Belongs to the 14-3-3 family.

This Vicia faba (Broad bean) protein is 14-3-3-like protein B.